The following is a 505-amino-acid chain: Deoxyguanosinetriphosphate triphosphohydrolase (505 aa).

In terms of domain architecture, HD spans 66–273 (RLTHSMEVQQ…MEAADDISYC (208 aa)).

The protein belongs to the dGTPase family. Type 1 subfamily. Homotetramer. It depends on Mg(2+) as a cofactor.

The catalysed reaction is dGTP + H2O = 2'-deoxyguanosine + triphosphate + H(+). DGTPase preferentially hydrolyzes dGTP over the other canonical NTPs. This is Deoxyguanosinetriphosphate triphosphohydrolase from Shigella boydii serotype 18 (strain CDC 3083-94 / BS512).